We begin with the raw amino-acid sequence, 268 residues long: 3-deoxy-manno-octulosonate cytidylyltransferase (268 aa).

The protein belongs to the KdsB family.

Its subcellular location is the cytoplasm. The enzyme catalyses 3-deoxy-alpha-D-manno-oct-2-ulosonate + CTP = CMP-3-deoxy-beta-D-manno-octulosonate + diphosphate. Its pathway is nucleotide-sugar biosynthesis; CMP-3-deoxy-D-manno-octulosonate biosynthesis; CMP-3-deoxy-D-manno-octulosonate from 3-deoxy-D-manno-octulosonate and CTP: step 1/1. It functions in the pathway bacterial outer membrane biogenesis; lipopolysaccharide biosynthesis. Activates KDO (a required 8-carbon sugar) for incorporation into bacterial lipopolysaccharide in Gram-negative bacteria. The protein is 3-deoxy-manno-octulosonate cytidylyltransferase of Psychrobacter arcticus (strain DSM 17307 / VKM B-2377 / 273-4).